The following is a 192-amino-acid chain: Chromophore lyase CpcS/CpeS 2 (192 aa).

This sequence belongs to the CpcS/CpeS biliprotein lyase family.

Covalently attaches a chromophore to Cys residue(s) of phycobiliproteins. The chain is Chromophore lyase CpcS/CpeS 2 from Synechocystis sp. (strain ATCC 27184 / PCC 6803 / Kazusa).